Consider the following 81-residue polypeptide: Sulfur carrier protein TusA (81 aa).

C19 (cysteine persulfide intermediate) is an active-site residue.

The protein belongs to the sulfur carrier protein TusA family. In terms of assembly, interacts with IscS.

The protein localises to the cytoplasm. Its pathway is tRNA modification. Functionally, sulfur carrier protein involved in sulfur trafficking in the cell. Part of a sulfur-relay system required for 2-thiolation during synthesis of 2-thiouridine of the modified wobble base 5-methylaminomethyl-2-thiouridine (mnm(5)s(2)U) in tRNA. Interacts with IscS and stimulates its cysteine desulfurase activity. Accepts an activated sulfur from IscS, which is then transferred to TusD, and thus determines the direction of sulfur flow from IscS to 2-thiouridine formation. Also appears to be involved in sulfur transfer for the biosynthesis of molybdopterin. This is Sulfur carrier protein TusA from Escherichia coli (strain SMS-3-5 / SECEC).